The primary structure comprises 206 residues: MSAVRSKICGITRIEDALAAAEAGADAIGLVFYPKSPRAVTVLQARAIIAALPPFITTVGLFVNASRCELNETLDAVALDMLQFHGDETPEECDGYHRPYIKALRVKAGDDIAQACRTYRNARGVLLDTYVEGVPGGTGETFDWALIPDDLDKPVILAGGLTSANVAQAIAQVRPYAVDVSGGVEKSKGIKDREKILAFMSAVHGT.

It belongs to the TrpF family.

It catalyses the reaction N-(5-phospho-beta-D-ribosyl)anthranilate = 1-(2-carboxyphenylamino)-1-deoxy-D-ribulose 5-phosphate. It functions in the pathway amino-acid biosynthesis; L-tryptophan biosynthesis; L-tryptophan from chorismate: step 3/5. The chain is N-(5'-phosphoribosyl)anthranilate isomerase from Pseudomonas syringae pv. tomato (strain ATCC BAA-871 / DC3000).